The primary structure comprises 105 residues: Large ribosomal subunit protein uL24 (105 aa).

It belongs to the universal ribosomal protein uL24 family. In terms of assembly, part of the 50S ribosomal subunit.

Its function is as follows. One of two assembly initiator proteins, it binds directly to the 5'-end of the 23S rRNA, where it nucleates assembly of the 50S subunit. In terms of biological role, one of the proteins that surrounds the polypeptide exit tunnel on the outside of the subunit. This is Large ribosomal subunit protein uL24 from Aeromonas salmonicida (strain A449).